Here is a 431-residue protein sequence, read N- to C-terminus: Enolase (431 aa).

A (2R)-2-phosphoglycerate-binding site is contributed by Gln-162. The active-site Proton donor is Glu-204. Residues Asp-241, Glu-288, and Asp-315 each contribute to the Mg(2+) site. (2R)-2-phosphoglycerate contacts are provided by Lys-340, Arg-369, Ser-370, and Lys-391. Residue Lys-340 is the Proton acceptor of the active site.

It belongs to the enolase family. Mg(2+) is required as a cofactor.

It is found in the cytoplasm. It localises to the secreted. The protein localises to the cell surface. It catalyses the reaction (2R)-2-phosphoglycerate = phosphoenolpyruvate + H2O. Its pathway is carbohydrate degradation; glycolysis; pyruvate from D-glyceraldehyde 3-phosphate: step 4/5. Functionally, catalyzes the reversible conversion of 2-phosphoglycerate (2-PG) into phosphoenolpyruvate (PEP). It is essential for the degradation of carbohydrates via glycolysis. The polypeptide is Enolase (Phocaeicola vulgatus (strain ATCC 8482 / DSM 1447 / JCM 5826 / CCUG 4940 / NBRC 14291 / NCTC 11154) (Bacteroides vulgatus)).